Here is a 198-residue protein sequence, read N- to C-terminus: Recombination protein RecR (198 aa).

The C4-type zinc-finger motif lies at 57-72; the sequence is CSVCGRLTDDDPCSIC. The Toprim domain maps to 80–175; that stretch reads TTILVLEDSR…KVTRLARGLA (96 aa).

This sequence belongs to the RecR family.

May play a role in DNA repair. It seems to be involved in an RecBC-independent recombinational process of DNA repair. It may act with RecF and RecO. This Streptococcus pneumoniae (strain Hungary19A-6) protein is Recombination protein RecR.